The following is a 377-amino-acid chain: tRNA-specific 2-thiouridylase MnmA (377 aa).

ATP contacts are provided by residues 12 to 19 (GMSGGVDS) and Met38. The interval 98–100 (NPD) is interaction with target base in tRNA. The Nucleophile role is filled by Cys103. A disulfide bond links Cys103 and Cys200. ATP is bound at residue Gly127. Residues 150-152 (KDQ) form an interaction with tRNA region. Cys200 functions as the Cysteine persulfide intermediate in the catalytic mechanism. The tract at residues 314 to 315 (RY) is interaction with tRNA.

Belongs to the MnmA/TRMU family.

It is found in the cytoplasm. The enzyme catalyses S-sulfanyl-L-cysteinyl-[protein] + uridine(34) in tRNA + AH2 + ATP = 2-thiouridine(34) in tRNA + L-cysteinyl-[protein] + A + AMP + diphosphate + H(+). Its function is as follows. Catalyzes the 2-thiolation of uridine at the wobble position (U34) of tRNA, leading to the formation of s(2)U34. The sequence is that of tRNA-specific 2-thiouridylase MnmA from Limosilactobacillus fermentum (strain NBRC 3956 / LMG 18251) (Lactobacillus fermentum).